Reading from the N-terminus, the 256-residue chain is Small ribosomal subunit protein eS1 (256 aa).

A compositionally biased stretch (basic residues) spans 1 to 18 (MAVGKNKRLSKGKKGVKK). The interval 1 to 20 (MAVGKNKRLSKGKKGVKKRT) is disordered. Alanine 2 bears the N-acetylalanine; partial mark.

Belongs to the eukaryotic ribosomal protein eS1 family. In terms of assembly, component of the small ribosomal subunit. Mature ribosomes consist of a small (40S) and a large (60S) subunit. The 40S subunit contains about 33 different proteins and 1 molecule of RNA (18S). The 60S subunit contains about 49 different proteins and 3 molecules of RNA (25S, 5.8S and 5S).

It localises to the cytoplasm. This chain is Small ribosomal subunit protein eS1 (rps1), found in Aspergillus clavatus (strain ATCC 1007 / CBS 513.65 / DSM 816 / NCTC 3887 / NRRL 1 / QM 1276 / 107).